Here is a 470-residue protein sequence, read N- to C-terminus: Na(+)-translocating NADH-quinone reductase subunit A (470 aa).

Belongs to the NqrA family. In terms of assembly, composed of six subunits; NqrA, NqrB, NqrC, NqrD, NqrE and NqrF.

It catalyses the reaction a ubiquinone + n Na(+)(in) + NADH + H(+) = a ubiquinol + n Na(+)(out) + NAD(+). In terms of biological role, NQR complex catalyzes the reduction of ubiquinone-1 to ubiquinol by two successive reactions, coupled with the transport of Na(+) ions from the cytoplasm to the periplasm. NqrA to NqrE are probably involved in the second step, the conversion of ubisemiquinone to ubiquinol. This chain is Na(+)-translocating NADH-quinone reductase subunit A, found in Chlamydia caviae (strain ATCC VR-813 / DSM 19441 / 03DC25 / GPIC) (Chlamydophila caviae).